Reading from the N-terminus, the 428-residue chain is Putative zinc finger protein 355P (428 aa).

Positions methionine 1–isoleucine 64 constitute a KRAB domain. 3 consecutive C2H2-type zinc fingers follow at residues tyrosine 72–histidine 94, tyrosine 100–histidine 122, and tyrosine 128–histidine 150. A C2H2-type 4; degenerate zinc finger spans residues tyrosine 156–histidine 178. The C2H2-type 5; degenerate zinc finger occupies tyrosine 184–histidine 206. The segment at cysteine 212–histidine 234 adopts a C2H2-type 6; degenerate zinc-finger fold. The segment at tyrosine 263 to histidine 285 adopts a C2H2-type 7; degenerate zinc-finger fold. 2 C2H2-type zinc fingers span residues tyrosine 291–histidine 313 and tyrosine 335–histidine 357. The segment at tyrosine 363–arginine 385 adopts a C2H2-type 10; degenerate zinc-finger fold. Residues tyrosine 391 to histidine 413 form a C2H2-type 11 zinc finger.

Belongs to the krueppel C2H2-type zinc-finger protein family.

It is found in the nucleus. In terms of biological role, may be involved in transcriptional regulation. This is Putative zinc finger protein 355P (ZNF355P) from Homo sapiens (Human).